The following is a 1052-amino-acid chain: Error-prone DNA polymerase (1052 aa).

This sequence belongs to the DNA polymerase type-C family. DnaE2 subfamily.

It localises to the cytoplasm. It catalyses the reaction DNA(n) + a 2'-deoxyribonucleoside 5'-triphosphate = DNA(n+1) + diphosphate. Its function is as follows. DNA polymerase involved in damage-induced mutagenesis and translesion synthesis (TLS). It is not the major replicative DNA polymerase. This is Error-prone DNA polymerase from Bordetella bronchiseptica (strain ATCC BAA-588 / NCTC 13252 / RB50) (Alcaligenes bronchisepticus).